The chain runs to 146 residues: Angiogenin (146 aa).

Positions 1 to 24 (MVMGPHLLLLVFILGLGLTPPTLA) are cleaved as a signal peptide. Gln25 bears the Pyrrolidone carboxylic acid mark. Catalysis depends on His37, which acts as the Proton acceptor. 3 cysteine pairs are disulfide-bonded: Cys50–Cys105, Cys63–Cys116, and Cys81–Cys131. Residues 55–59 (RLRNM) carry the Nucleolar localization signal motif. TRNA contacts are provided by Cys105 and Ile127. The active-site Proton donor is His138.

Belongs to the pancreatic ribonuclease family. In terms of assembly, homodimer. Interacts with RNH1; inhibiting ANG ribonuclease activity. Interacts with PCNA.

The protein resides in the secreted. The protein localises to the nucleus. Its subcellular location is the nucleolus. It localises to the cytoplasm. It is found in the stress granule. Has weak tRNA ribonuclease activity by itself due to partial autoinhibition by its C-terminus, which folds into a short alpha-helix that partially occludes the substrate-binding site. In absence of stress, the ribonuclease activity is inhibited by RNH1 in the cytoplasm. In response to stress, dissociates from RNH1 in the cytoplasm and associates with cytoplasmic ribosomes with vacant A-sites: ribosomes directly activate the tRNA ribonuclease activity of ANG by refolding the C-terminal alpha-helix. In response to stress, the angiogenic activity of ANG is inhibited by RNH1 in the nucleus. Its function is as follows. Secreted ribonuclease that can either promote or restrict cell proliferation of target cells, depending on the context. Endocytosed in target cells via its receptor PLXNB2 and translocates to the cytoplasm or nucleus. Under stress conditions, localizes to the cytoplasm and promotes the assembly of stress granules (SGs): specifically cleaves a subset of tRNAs within anticodon loops to produce tRNA-derived stress-induced fragments (tiRNAs), resulting in translation repression and inhibition of cell proliferation. tiRNas also prevent formation of apoptosome, thereby promoting cell survival. Preferentially cleaves RNAs between a pyrimidine and an adenosine residue, suggesting that it cleaves the anticodon loop of tRNA(Ala) (32-UUAGCAU-38) after positions 33 and 36. Cleaves a subset of tRNAs, including tRNA(Ala), tRNA(Glu), tRNA(Gly), tRNA(Lys), tRNA(Val), tRNA(His), tRNA(Asp) and tRNA(Sec). Under growth conditions and in differentiated cells, translocates to the nucleus and stimulates ribosomal RNA (rRNA) transcription, including that containing the initiation site sequences of 45S rRNA, thereby promoting cell growth and proliferation. Angiogenin induces vascularization of normal and malignant tissues via its ability to promote rRNA transcription. Involved in hematopoietic stem and progenitor cell (HSPC) growth and survival by promoting rRNA transcription in growth conditions and inhibiting translation in response to stress, respectively. Mediates the crosstalk between myeloid and intestinal epithelial cells to protect the intestinal epithelial barrier integrity: secreted by myeloid cells and promotes intestinal epithelial cells proliferation and survival. Also mediates osteoclast-endothelial cell crosstalk in growing bone: produced by osteoclasts and protects the neighboring vascular cells against senescence by promoting rRNA transcription. The polypeptide is Angiogenin (ANG) (Saimiri sciureus (Common squirrel monkey)).